The sequence spans 156 residues: Small ribosomal subunit protein uS7 (156 aa).

It belongs to the universal ribosomal protein uS7 family. As to quaternary structure, part of the 30S ribosomal subunit. Contacts proteins S9 and S11.

One of the primary rRNA binding proteins, it binds directly to 16S rRNA where it nucleates assembly of the head domain of the 30S subunit. Is located at the subunit interface close to the decoding center, probably blocks exit of the E-site tRNA. The chain is Small ribosomal subunit protein uS7 from Campylobacter jejuni subsp. jejuni serotype O:6 (strain 81116 / NCTC 11828).